A 591-amino-acid polypeptide reads, in one-letter code: Aspartate--tRNA(Asp/Asn) ligase (591 aa).

Glu176 serves as a coordination point for L-aspartate. Positions 200 to 203 (QLFK) are aspartate. L-aspartate is bound at residue Arg222. ATP-binding positions include 222 to 224 (RDE) and Gln231. Residue His450 coordinates L-aspartate. Position 484 (Glu484) interacts with ATP. Arg491 contacts L-aspartate. 536–539 (GLDR) provides a ligand contact to ATP.

It belongs to the class-II aminoacyl-tRNA synthetase family. Type 1 subfamily. Homodimer.

It localises to the cytoplasm. The catalysed reaction is tRNA(Asx) + L-aspartate + ATP = L-aspartyl-tRNA(Asx) + AMP + diphosphate. Functionally, aspartyl-tRNA synthetase with relaxed tRNA specificity since it is able to aspartylate not only its cognate tRNA(Asp) but also tRNA(Asn). Reaction proceeds in two steps: L-aspartate is first activated by ATP to form Asp-AMP and then transferred to the acceptor end of tRNA(Asp/Asn). The chain is Aspartate--tRNA(Asp/Asn) ligase from Bacillus mycoides (strain KBAB4) (Bacillus weihenstephanensis).